An 88-amino-acid chain; its full sequence is Small ribosomal subunit protein uS15 (88 aa).

Belongs to the universal ribosomal protein uS15 family. Part of the 30S ribosomal subunit. Forms a bridge to the 50S subunit in the 70S ribosome, contacting the 23S rRNA.

In terms of biological role, one of the primary rRNA binding proteins, it binds directly to 16S rRNA where it helps nucleate assembly of the platform of the 30S subunit by binding and bridging several RNA helices of the 16S rRNA. Forms an intersubunit bridge (bridge B4) with the 23S rRNA of the 50S subunit in the ribosome. This chain is Small ribosomal subunit protein uS15, found in Pelobacter propionicus (strain DSM 2379 / NBRC 103807 / OttBd1).